Reading from the N-terminus, the 380-residue chain is Beta-1,3-N-acetylglucosaminyltransferase lunatic fringe (380 aa).

The Cytoplasmic portion of the chain corresponds to 1 to 8 (MLKRCGRR). The chain crosses the membrane as a helical; Signal-anchor for type II membrane protein span at residues 9 to 29 (LLLALAGALLACLLVLTADPP). The Lumenal portion of the chain corresponds to 30–380 (PPPVPAERGR…TSWCPRSAIF (351 aa)). Residues 85–110 (SRRDVGPPPGGAPRPADGPPRPLAEP) form a disordered region. Residues 90 to 107 (GPPPGGAPRPADGPPRPL) are compositionally biased toward pro residues. Substrate is bound at residue arginine 130. A glycan (N-linked (GlcNAc...) asparagine) is linked at asparagine 168. Intrachain disulfides connect cysteine 169-cysteine 180 and cysteine 198-cysteine 261. Aspartate 202 is a substrate binding site. Aspartate 203 serves as a coordination point for Mn(2+). The active site involves aspartate 291. A Mn(2+)-binding site is contributed by histidine 315. The cysteines at positions 365 and 374 are disulfide-linked.

Belongs to the glycosyltransferase 31 family. It depends on Mn(2+) as a cofactor. Co(2+) serves as cofactor. In terms of processing, a soluble form may be derived from the membrane form by proteolytic processing.

The protein localises to the golgi apparatus. The protein resides in the golgi apparatus membrane. The catalysed reaction is 3-O-(alpha-L-fucosyl)-L-threonyl-[EGF-like domain protein] + UDP-N-acetyl-alpha-D-glucosamine = 3-O-(N-acetyl-beta-D-glucosaminyl-(1-&gt;3)-alpha-L-fucosyl)-L-threonyl-[EGF-like domain protein] + UDP + H(+). The enzyme catalyses 3-O-(alpha-L-fucosyl)-L-seryl-[EGF-like domain protein] + UDP-N-acetyl-alpha-D-glucosamine = 3-O-(N-acetyl-beta-D-glucosaminyl-(1-&gt;3)-alpha-L-fucosyl)-L-seryl-[EGF-like domain protein] + UDP + H(+). Glycosyltransferase that initiates the elongation of O-linked fucose residues attached to EGF-like repeats in the extracellular domain of Notch molecules. Modulates NOTCH1 activity by modifying O-fucose residues at specific EGF-like domains resulting in inhibition of NOTCH1 activation by JAG1 and enhancement of NOTCH1 activation by DLL1 via an increase in its binding to DLL1. Decreases the binding of JAG1 to NOTCH2 but not that of DLL1. Essential mediator of somite segmentation and patterning. The sequence is that of Beta-1,3-N-acetylglucosaminyltransferase lunatic fringe (LFNG) from Bos taurus (Bovine).